A 391-amino-acid polypeptide reads, in one-letter code: Pyruvate dehydrogenase E1 component subunit beta-3, chloroplastic (391 aa).

The transit peptide at M1–V35 directs the protein to the chloroplast. Residue E127 coordinates thiamine diphosphate. K(+) is bound by residues I180, A228, I229, and N233.

As to quaternary structure, tetramer of 2 alpha and 2 beta subunits. Requires thiamine diphosphate as cofactor.

Its subcellular location is the plastid. The protein localises to the chloroplast. The catalysed reaction is N(6)-[(R)-lipoyl]-L-lysyl-[protein] + pyruvate + H(+) = N(6)-[(R)-S(8)-acetyldihydrolipoyl]-L-lysyl-[protein] + CO2. Its function is as follows. The pyruvate dehydrogenase complex catalyzes the overall conversion of pyruvate to acetyl-CoA and CO(2). It contains multiple copies of three enzymatic components: pyruvate dehydrogenase (E1), dihydrolipoamide acetyltransferase (E2) and lipoamide dehydrogenase (E3). This chain is Pyruvate dehydrogenase E1 component subunit beta-3, chloroplastic, found in Oryza sativa subsp. japonica (Rice).